A 198-amino-acid chain; its full sequence is Elongation factor Ts (198 aa).

The segment at 82–85 is involved in Mg(2+) ion dislocation from EF-Tu; it reads SDFV.

The protein belongs to the EF-Ts family.

It is found in the cytoplasm. Associates with the EF-Tu.GDP complex and induces the exchange of GDP to GTP. It remains bound to the aminoacyl-tRNA.EF-Tu.GTP complex up to the GTP hydrolysis stage on the ribosome. This is Elongation factor Ts from Desulfosudis oleivorans (strain DSM 6200 / JCM 39069 / Hxd3) (Desulfococcus oleovorans).